Consider the following 396-residue polypeptide: L-lactate dehydrogenase (396 aa).

The FMN hydroxy acid dehydrogenase domain maps to 1-380 (MIISAASDYR…TQDSLVQVLG (380 aa)). Tyr-24 provides a ligand contact to substrate. FMN is bound by residues Ser-106 and Gln-127. Tyr-129 lines the substrate pocket. Thr-155 provides a ligand contact to FMN. A substrate-binding site is contributed by Arg-164. Residue Lys-251 coordinates FMN. The active-site Proton acceptor is His-275. Arg-278 contributes to the substrate binding site. Residue 306–330 (DSGIRNGLDVVRMIALGADTVLLGR) participates in FMN binding.

The protein belongs to the FMN-dependent alpha-hydroxy acid dehydrogenase family. FMN serves as cofactor.

It is found in the cell inner membrane. The enzyme catalyses (S)-lactate + A = pyruvate + AH2. Its function is as follows. Catalyzes the conversion of L-lactate to pyruvate. Is coupled to the respiratory chain. The sequence is that of L-lactate dehydrogenase from Escherichia coli O1:K1 / APEC.